The following is a 471-amino-acid chain: Uronate isomerase (471 aa).

The protein belongs to the metallo-dependent hydrolases superfamily. Uronate isomerase family.

It carries out the reaction D-glucuronate = D-fructuronate. It catalyses the reaction aldehydo-D-galacturonate = keto-D-tagaturonate. It participates in carbohydrate metabolism; pentose and glucuronate interconversion. The protein is Uronate isomerase of Cellvibrio japonicus (strain Ueda107) (Pseudomonas fluorescens subsp. cellulosa).